Reading from the N-terminus, the 610-residue chain is Glutamine--fructose-6-phosphate aminotransferase [isomerizing] (610 aa).

C2 functions as the Nucleophile; for GATase activity in the catalytic mechanism. The 216-residue stretch at 2 to 217 (CGIVGYVGQK…DKEFVVLTND (216 aa)) folds into the Glutamine amidotransferase type-2 domain. SIS domains follow at residues 284 to 424 (ITKE…LKGS) and 453 to 600 (LIKE…VDKP). The active-site For Fru-6P isomerization activity is the K605.

In terms of assembly, homodimer.

The protein localises to the cytoplasm. The catalysed reaction is D-fructose 6-phosphate + L-glutamine = D-glucosamine 6-phosphate + L-glutamate. In terms of biological role, catalyzes the first step in hexosamine metabolism, converting fructose-6P into glucosamine-6P using glutamine as a nitrogen source. The protein is Glutamine--fructose-6-phosphate aminotransferase [isomerizing] of Clostridium perfringens (strain 13 / Type A).